Here is a 606-residue protein sequence, read N- to C-terminus: Chaperone protein DnaK (606 aa).

At Thr174 the chain carries Phosphothreonine; by autocatalysis. A disordered region spans residues 576–606; it reads QAAGSANPGGSQGTSQGNVYEADYKVEDDNK. Residues 597–606 are compositionally biased toward basic and acidic residues; the sequence is ADYKVEDDNK.

The protein belongs to the heat shock protein 70 family.

Acts as a chaperone. The protein is Chaperone protein DnaK of Caldanaerobacter subterraneus subsp. tengcongensis (strain DSM 15242 / JCM 11007 / NBRC 100824 / MB4) (Thermoanaerobacter tengcongensis).